The following is a 209-amino-acid chain: Egg case collagen (209 aa).

The nonhelical region stretch occupies residues 1-129 (VYMSGXGKPP…YKGNHGFYLV (129 aa)). Positions 130–209 (LPAGYPGTPG…DPGLPGEYGV (80 aa)) are triple-helical region. The interval 138-209 (PGTPGPRGGP…DPGLPGEYGV (72 aa)) is disordered. Gly residues predominate over residues 142–162 (GPRGGPGDPGMPGEPGVGFPG).

In terms of biological role, major component of the egg case wall which is secreted by the oviduct. The egg case combines mechanical strength and toughness with high permeability to small molecules and ions. This chain is Egg case collagen, found in Scyliorhinus canicula (Small-spotted catshark).